We begin with the raw amino-acid sequence, 326 residues long: 5,10-methylenetetrahydromethanopterin reductase (326 aa).

It belongs to the mer family.

Its subcellular location is the cytoplasm. The catalysed reaction is 5-methyl-5,6,7,8-tetrahydromethanopterin + oxidized coenzyme F420-(gamma-L-Glu)(n) + H(+) = 5,10-methylenetetrahydromethanopterin + reduced coenzyme F420-(gamma-L-Glu)(n). The protein operates within one-carbon metabolism; methanogenesis from CO(2); methyl-coenzyme M from 5,10-methylene-5,6,7,8-tetrahydromethanopterin: step 1/2. Catalyzes the reversible reduction of methylene-H(4)MPT to methyl-H(4)MPT. This is 5,10-methylenetetrahydromethanopterin reductase from Methanolobus tindarius.